A 102-amino-acid polypeptide reads, in one-letter code: NADH-quinone oxidoreductase subunit K (102 aa).

3 helical membrane passes run 5 to 25 (IAHY…GIFL), 31 to 51 (IIIL…FIAF), and 66 to 86 (FVLT…VVFF).

The protein belongs to the complex I subunit 4L family. In terms of assembly, NDH-1 is composed of 14 different subunits. Subunits NuoA, H, J, K, L, M, N constitute the membrane sector of the complex.

The protein localises to the cell inner membrane. It catalyses the reaction a quinone + NADH + 5 H(+)(in) = a quinol + NAD(+) + 4 H(+)(out). Its function is as follows. NDH-1 shuttles electrons from NADH, via FMN and iron-sulfur (Fe-S) centers, to quinones in the respiratory chain. The immediate electron acceptor for the enzyme in this species is believed to be ubiquinone. Couples the redox reaction to proton translocation (for every two electrons transferred, four hydrogen ions are translocated across the cytoplasmic membrane), and thus conserves the redox energy in a proton gradient. This chain is NADH-quinone oxidoreductase subunit K, found in Chelativorans sp. (strain BNC1).